Consider the following 683-residue polypeptide: Methionine--tRNA ligase (683 aa).

The 'HIGH' region motif lies at 15–25 (PYANGPIHLGH). Residues C146, C149, C159, and C162 each contribute to the Zn(2+) site. A 'KMSKS' region motif is present at residues 332–336 (KMSKS). K335 contacts ATP. Positions 582 to 683 (DFAKIDLRIA…EGALPGMRVK (102 aa)) constitute a tRNA-binding domain.

This sequence belongs to the class-I aminoacyl-tRNA synthetase family. MetG type 1 subfamily. In terms of assembly, homodimer. Zn(2+) is required as a cofactor.

The protein resides in the cytoplasm. It carries out the reaction tRNA(Met) + L-methionine + ATP = L-methionyl-tRNA(Met) + AMP + diphosphate. In terms of biological role, is required not only for elongation of protein synthesis but also for the initiation of all mRNA translation through initiator tRNA(fMet) aminoacylation. This Shewanella frigidimarina (strain NCIMB 400) protein is Methionine--tRNA ligase.